The primary structure comprises 566 residues: Putative ABC transporter ATP-binding protein lp_0149 (566 aa).

2 ABC transporter domains span residues 6–247 (ISFK…GLRE) and 302–536 (LAIE…ASLA). Residues 40-47 (GPSGSGKS) and 335-342 (GQNGTGKS) each bind ATP.

Belongs to the ABC transporter superfamily.

Its subcellular location is the cell membrane. Functionally, probably part of an ABC transporter complex. Responsible for energy coupling to the transport system. In Lactiplantibacillus plantarum (strain ATCC BAA-793 / NCIMB 8826 / WCFS1) (Lactobacillus plantarum), this protein is Putative ABC transporter ATP-binding protein lp_0149.